Consider the following 466-residue polypeptide: GTPase Der (466 aa).

EngA-type G domains are found at residues 3–167 (PTLV…PDEP) and 176–350 (PKIA…GAAM). Residues 9-16 (GRSNVGKS), 56-60 (DTGGF), 119-122 (NKTE), 182-189 (GRPNVGKS), 229-233 (DTAGL), and 294-297 (NKWD) contribute to the GTP site. One can recognise a KH-like domain in the interval 351–435 (AHLPTPRLTR…PLRIEFRTGR (85 aa)). The disordered stretch occupies residues 433 to 466 (TGRNPYAGKSPAPLTEAEAKRAHRRRRYGRKKYG). Residues 453–466 (RAHRRRRYGRKKYG) are compositionally biased toward basic residues.

It belongs to the TRAFAC class TrmE-Era-EngA-EngB-Septin-like GTPase superfamily. EngA (Der) GTPase family. In terms of assembly, associates with the 50S ribosomal subunit.

Its function is as follows. GTPase that plays an essential role in the late steps of ribosome biogenesis. The chain is GTPase Der from Nitrosospira multiformis (strain ATCC 25196 / NCIMB 11849 / C 71).